The chain runs to 421 residues: Serine hydroxymethyltransferase (421 aa).

(6S)-5,6,7,8-tetrahydrofolate is bound by residues Leu-121 and 125-127; that span reads GHL. Lys-229 is subject to N6-(pyridoxal phosphate)lysine.

It belongs to the SHMT family. Homodimer. Pyridoxal 5'-phosphate serves as cofactor.

It localises to the cytoplasm. The catalysed reaction is (6R)-5,10-methylene-5,6,7,8-tetrahydrofolate + glycine + H2O = (6S)-5,6,7,8-tetrahydrofolate + L-serine. It functions in the pathway one-carbon metabolism; tetrahydrofolate interconversion. Its pathway is amino-acid biosynthesis; glycine biosynthesis; glycine from L-serine: step 1/1. Functionally, catalyzes the reversible interconversion of serine and glycine with tetrahydrofolate (THF) serving as the one-carbon carrier. This reaction serves as the major source of one-carbon groups required for the biosynthesis of purines, thymidylate, methionine, and other important biomolecules. Also exhibits THF-independent aldolase activity toward beta-hydroxyamino acids, producing glycine and aldehydes, via a retro-aldol mechanism. The sequence is that of Serine hydroxymethyltransferase from Haemophilus influenzae (strain PittGG).